Here is a 506-residue protein sequence, read N- to C-terminus: Histidine ammonia-lyase (506 aa).

The 5-imidazolinone (Ala-Gly) cross-link spans 143–145 (ASG). Position 144 is a 2,3-didehydroalanine (Ser) (Ser144).

It belongs to the PAL/histidase family. In terms of processing, contains an active site 4-methylidene-imidazol-5-one (MIO), which is formed autocatalytically by cyclization and dehydration of residues Ala-Ser-Gly.

It localises to the cytoplasm. It catalyses the reaction L-histidine = trans-urocanate + NH4(+). It participates in amino-acid degradation; L-histidine degradation into L-glutamate; N-formimidoyl-L-glutamate from L-histidine: step 1/3. The sequence is that of Histidine ammonia-lyase from Salmonella paratyphi C (strain RKS4594).